A 402-amino-acid polypeptide reads, in one-letter code: Tumor necrosis factor receptor superfamily member 11B (402 aa).

Residues 1 to 21 (MNKLLCCALVFLDISIKWTTQ) form the signal peptide. TNFR-Cys repeat units follow at residues 24–62 (FPPK…KTVC), 64–105 (PCPD…NRVC), 106–142 (ECEE…NTVC), and 144–185 (RCPD…DNIC). Disulfide bonds link Cys41–Cys54, Cys44–Cys62, Cys65–Cys80, Cys83–Cys97, Cys87–Cys105, Cys107–Cys118, Cys124–Cys142, and Cys145–Cys160. N-linked (GlcNAc...) asparagine glycans are attached at residues Asn165 and Asn178. Cysteines 166 and 185 form a disulfide. Death domains are found at residues 198–269 (IDMT…DMVK) and 270–365 (KIIQ…VIQS).

Homodimer. Interacts with TNFSF10 and TNFSF11. Post-translationally, N-glycosylated. Contains sialic acid residues.

The protein resides in the secreted. Acts as a decoy receptor for TNFSF11/RANKL and thereby neutralizes its function in osteoclastogenesis. Inhibits the activation of osteoclasts and promotes osteoclast apoptosis. Bone homeostasis seems to depend on the local ratio between TNFSF11 and TNFRSF11B. May also play a role in preventing arterial calcification. May act as decoy receptor for TNFSF10/TRAIL and protect against apoptosis. TNFSF10/TRAIL binding blocks the inhibition of osteoclastogenesis. The polypeptide is Tumor necrosis factor receptor superfamily member 11B (TNFRSF11B) (Bos taurus (Bovine)).